Consider the following 869-residue polypeptide: Structure-specific endonuclease subunit SLX4 (869 aa).

Residues 40–59 show a composition bias toward low complexity; it reads SPLSLPSPTSLLDFLSTSTS. 7 disordered regions span residues 40 to 79, 92 to 116, 165 to 199, 293 to 323, 351 to 388, 418 to 437, and 630 to 774; these read SPLS…EVLD, NRVV…ESPG, KANQ…INDL, GLSD…NPPK, TLLS…KKNE, ANGH…HISN, and KTSN…ASET. Residues 63-79 are compositionally biased toward basic and acidic residues; that stretch reads ARSDTDGDKTQGKEVLD. Polar residues-rich tracts occupy residues 165 to 174 and 294 to 311; these read KANQTVSLQP and LSDS…SATS. Over residues 312–322 the composition is skewed to basic residues; the sequence is KPRRVKAKNPP. 2 stretches are compositionally biased toward polar residues: residues 647–657 and 664–673; these read VDESTQGQSLG and SIPQTATTQV. The span at 688–700 shows a compositional bias: low complexity; it reads VPVPSRRSTSTSK. A compositionally biased stretch (polar residues) spans 765-774; sequence IPSTGTASET.

Belongs to the SLX4 family. Forms a heterodimer with SLX1. In terms of processing, phosphorylated in response to DNA damage.

The protein resides in the nucleus. Regulatory subunit of the SLX1-SLX4 structure-specific endonuclease that resolves DNA secondary structures generated during DNA repair and recombination. Has endonuclease activity towards branched DNA substrates, introducing single-strand cuts in duplex DNA close to junctions with ss-DNA. The chain is Structure-specific endonuclease subunit SLX4 from Paracoccidioides brasiliensis (strain Pb18).